We begin with the raw amino-acid sequence, 200 residues long: GTP cyclohydrolase-2 (200 aa).

50–54 (RVHSE) is a binding site for GTP. Zn(2+) is bound by residues C55, C66, and C68. Residues Q71, 93 to 95 (EGR), and T115 each bind GTP. D127 acts as the Proton acceptor in catalysis. R129 serves as the catalytic Nucleophile. Residues T150 and K155 each contribute to the GTP site.

It belongs to the GTP cyclohydrolase II family. Zn(2+) serves as cofactor.

It catalyses the reaction GTP + 4 H2O = 2,5-diamino-6-hydroxy-4-(5-phosphoribosylamino)-pyrimidine + formate + 2 phosphate + 3 H(+). Its pathway is cofactor biosynthesis; riboflavin biosynthesis; 5-amino-6-(D-ribitylamino)uracil from GTP: step 1/4. Its function is as follows. Catalyzes the conversion of GTP to 2,5-diamino-6-ribosylamino-4(3H)-pyrimidinone 5'-phosphate (DARP), formate and pyrophosphate. The protein is GTP cyclohydrolase-2 of Acinetobacter baumannii (strain SDF).